The primary structure comprises 830 residues: DNA gyrase subunit A (830 aa).

The region spanning 33-497 is the Topo IIA-type catalytic domain; the sequence is LPDVRDGLKP…AENDIDIEDL (465 aa). Tyr121 functions as the O-(5'-phospho-DNA)-tyrosine intermediate in the catalytic mechanism. The short motif at 524 to 530 is the GyrA-box element; that stretch reads QKRGGRG. The segment at 805–830 is disordered; the sequence is KDDSEQLEDSEEVSEVHDAEENNSEE.

This sequence belongs to the type II topoisomerase GyrA/ParC subunit family. As to quaternary structure, heterotetramer, composed of two GyrA and two GyrB chains. In the heterotetramer, GyrA contains the active site tyrosine that forms a transient covalent intermediate with DNA, while GyrB binds cofactors and catalyzes ATP hydrolysis.

Its subcellular location is the cytoplasm. It catalyses the reaction ATP-dependent breakage, passage and rejoining of double-stranded DNA.. A type II topoisomerase that negatively supercoils closed circular double-stranded (ds) DNA in an ATP-dependent manner to modulate DNA topology and maintain chromosomes in an underwound state. Negative supercoiling favors strand separation, and DNA replication, transcription, recombination and repair, all of which involve strand separation. Also able to catalyze the interconversion of other topological isomers of dsDNA rings, including catenanes and knotted rings. Type II topoisomerases break and join 2 DNA strands simultaneously in an ATP-dependent manner. This is DNA gyrase subunit A from Clostridium acetobutylicum (strain ATCC 824 / DSM 792 / JCM 1419 / IAM 19013 / LMG 5710 / NBRC 13948 / NRRL B-527 / VKM B-1787 / 2291 / W).